A 297-amino-acid polypeptide reads, in one-letter code: Probable endonuclease 4 (297 aa).

Positions 69, 110, 145, 179, 182, 214, 227, 229, and 259 each coordinate Zn(2+).

This sequence belongs to the AP endonuclease 2 family. It depends on Zn(2+) as a cofactor.

The enzyme catalyses Endonucleolytic cleavage to 5'-phosphooligonucleotide end-products.. In terms of biological role, endonuclease IV plays a role in DNA repair. It cleaves phosphodiester bonds at apurinic or apyrimidinic (AP) sites, generating a 3'-hydroxyl group and a 5'-terminal sugar phosphate. The chain is Probable endonuclease 4 from Listeria monocytogenes serotype 4b (strain F2365).